The primary structure comprises 73 residues: Dermaseptin-1 (73 aa).

The signal sequence occupies residues 1-22 (MAFLKKSIFLALFLGMVSLSIC). Residues 23-43 (EEEKRENEGEEEQEDDEQSEM) constitute a propeptide, removed in mature form. The disordered stretch occupies residues 25 to 46 (EKRENEGEEEQEDDEQSEMKRG). Over residues 30 to 40 (EGEEEQEDDEQ) the composition is skewed to acidic residues. At leucine 70 the chain carries Leucine amide. Positions 72 to 73 (EQ) are cleaved as a propeptide — removed in mature form.

As to expression, expressed by the skin glands.

The protein localises to the secreted. Its function is as follows. Has antiparasitic activity against trypomastigote form of T.cruzi (IC(50)=0.68 uM) in vitro but not against L.infantum. Probably acts by permeabilizing cell membranes. In vitro, shows no cytotoxicity against macrophages. Has antibacterial activity. In Pithecopus nordestinus (Northeastern Brazilian leaf frog), this protein is Dermaseptin-1.